Consider the following 315-residue polypeptide: Ribose-phosphate pyrophosphokinase (315 aa).

ATP-binding positions include 37–39 (DGE) and 96–97 (RQ). Mg(2+)-binding residues include His131 and Asp171. Residue Lys195 is part of the active site. Residues Arg197, Asp221, and 225–229 (DTGGT) each bind D-ribose 5-phosphate.

The protein belongs to the ribose-phosphate pyrophosphokinase family. Class I subfamily. In terms of assembly, homohexamer. Mg(2+) is required as a cofactor.

It is found in the cytoplasm. It catalyses the reaction D-ribose 5-phosphate + ATP = 5-phospho-alpha-D-ribose 1-diphosphate + AMP + H(+). It functions in the pathway metabolic intermediate biosynthesis; 5-phospho-alpha-D-ribose 1-diphosphate biosynthesis; 5-phospho-alpha-D-ribose 1-diphosphate from D-ribose 5-phosphate (route I): step 1/1. Involved in the biosynthesis of the central metabolite phospho-alpha-D-ribosyl-1-pyrophosphate (PRPP) via the transfer of pyrophosphoryl group from ATP to 1-hydroxyl of ribose-5-phosphate (Rib-5-P). This is Ribose-phosphate pyrophosphokinase from Pasteurella multocida (strain Pm70).